Reading from the N-terminus, the 700-residue chain is Sex comb on midleg-like protein 2 (700 aa).

Positions 1 to 33 (MGQTVNEDSMDVKKENQEKTPQSSTSSVQRDDF) are disordered. A compositionally biased stretch (polar residues) spans 19 to 28 (KTPQSSTSSV). MBT repeat units follow at residues 33-131 (FHWE…LQPP) and 139-240 (SSWP…LQPP). Residues 253–281 (TESSPSEASQHSMQSPQKTTLILPTQQVR) are compositionally biased toward polar residues. Disordered stretches follow at residues 253-320 (TESS…EKPL) and 466-550 (PFSS…SSLN). Phosphoserine is present on residues S256, S261, S267, S299, and S300. T305 is subject to Phosphothreonine. Residues 476 to 495 (SSAEHDKNQSAKEDVTERQS) show a composition bias toward basic and acidic residues. A Phosphoserine modification is found at S499. T503 carries the post-translational modification Phosphothreonine. Residue S511 is modified to Phosphoserine. K518 participates in a covalent cross-link: Glycyl lysine isopeptide (Lys-Gly) (interchain with G-Cter in SUMO2). Position 522 is a phosphoserine (S522). Basic and acidic residues predominate over residues 535–545 (PKEENLSEDSK). K536 is covalently cross-linked (Glycyl lysine isopeptide (Lys-Gly) (interchain with G-Cter in SUMO2)). Phosphoserine is present on residues S570, S583, S590, and S594. Residues 575 to 584 (RSVPGTTSSP) are compositionally biased toward polar residues. Residues 575–594 (RSVPGTTSSPLVGDISPKSS) form a disordered region. Residues K599 and K605 each participate in a glycyl lysine isopeptide (Lys-Gly) (interchain with G-Cter in SUMO2) cross-link. The region spanning 631 to 700 (WSVDEVIQFM…IEKLKEGKYS (70 aa)) is the SAM domain.

The protein belongs to the SCM family. In terms of tissue distribution, highly expressed in placenta, thymus and testis. Detected at lower levels in brain, liver, skeletal muscle, pancreas and ovary.

It localises to the nucleus. Putative Polycomb group (PcG) protein. PcG proteins act by forming multiprotein complexes, which are required to maintain the transcriptionally repressive state of homeotic genes throughout development. The protein is Sex comb on midleg-like protein 2 (SCML2) of Homo sapiens (Human).